The following is a 168-amino-acid chain: Transcriptional repressor NrdR (168 aa).

Residues cysteine 3–cysteine 34 fold into a zinc finger. Residues tyrosine 49–glutamate 139 enclose the ATP-cone domain.

Belongs to the NrdR family. Zn(2+) serves as cofactor.

Functionally, negatively regulates transcription of bacterial ribonucleotide reductase nrd genes and operons by binding to NrdR-boxes. The polypeptide is Transcriptional repressor NrdR (Acidobacterium capsulatum (strain ATCC 51196 / DSM 11244 / BCRC 80197 / JCM 7670 / NBRC 15755 / NCIMB 13165 / 161)).